The primary structure comprises 187 residues: Dihydrofolate reductase type A10 (187 aa).

The DHFR domain occupies 2-174; sequence NISLIFANEL…YSLSIDKFVR (173 aa).

This sequence belongs to the dihydrofolate reductase family. Homodimer.

It carries out the reaction (6S)-5,6,7,8-tetrahydrofolate + NADP(+) = 7,8-dihydrofolate + NADPH + H(+). It functions in the pathway cofactor biosynthesis; tetrahydrofolate biosynthesis; 5,6,7,8-tetrahydrofolate from 7,8-dihydrofolate: step 1/1. In terms of biological role, key enzyme in folate metabolism. Catalyzes an essential reaction for de novo glycine and purine synthesis, and for DNA precursor synthesis. The chain is Dihydrofolate reductase type A10 (dfrA10) from Escherichia coli.